The chain runs to 88 residues: Apolipoprotein C-I (88 aa).

Positions 1–26 (MRLFLSLPVLVVVLAMVLEGPAPTQA) are cleaved as a signal peptide.

This sequence belongs to the apolipoprotein C1 family.

The protein localises to the secreted. Functionally, inhibitor of lipoprotein binding to the low density lipoprotein (LDL) receptor, LDL receptor-related protein, and very low density lipoprotein (VLDL) receptor. Associates with high density lipoproteins (HDL) and the triacylglycerol-rich lipoproteins in the plasma and makes up about 10% of the protein of the VLDL and 2% of that of HDL. Appears to interfere directly with fatty acid uptake and is also the major plasma inhibitor of cholesteryl ester transfer protein (CETP). Binds free fatty acids and reduces their intracellular esterification. Modulates the interaction of APOE with beta-migrating VLDL and inhibits binding of beta-VLDL to the LDL receptor-related protein. This Leptonychotes weddellii (Weddell seal) protein is Apolipoprotein C-I (APOC1).